Here is a 382-residue protein sequence, read N- to C-terminus: Carbamoyl phosphate synthase small chain (382 aa).

The CPSase stretch occupies residues 1–189 (MIKSALLVLE…GLPEAKKEDE (189 aa)). Serine 47, glycine 241, and glycine 243 together coordinate L-glutamine. The region spanning 193 to 380 (HVVAYDFGAK…IALIEQYRKT (188 aa)) is the Glutamine amidotransferase type-1 domain. Cysteine 269 (nucleophile) is an active-site residue. L-glutamine-binding residues include leucine 270, glutamine 273, asparagine 311, glycine 313, and phenylalanine 314. Catalysis depends on residues histidine 353 and glutamate 355.

It belongs to the CarA family. In terms of assembly, composed of two chains; the small (or glutamine) chain promotes the hydrolysis of glutamine to ammonia, which is used by the large (or ammonia) chain to synthesize carbamoyl phosphate. Tetramer of heterodimers (alpha,beta)4.

It catalyses the reaction hydrogencarbonate + L-glutamine + 2 ATP + H2O = carbamoyl phosphate + L-glutamate + 2 ADP + phosphate + 2 H(+). The catalysed reaction is L-glutamine + H2O = L-glutamate + NH4(+). The protein operates within amino-acid biosynthesis; L-arginine biosynthesis; carbamoyl phosphate from bicarbonate: step 1/1. Its pathway is pyrimidine metabolism; UMP biosynthesis via de novo pathway; (S)-dihydroorotate from bicarbonate: step 1/3. Its function is as follows. Small subunit of the glutamine-dependent carbamoyl phosphate synthetase (CPSase). CPSase catalyzes the formation of carbamoyl phosphate from the ammonia moiety of glutamine, carbonate, and phosphate donated by ATP, constituting the first step of 2 biosynthetic pathways, one leading to arginine and/or urea and the other to pyrimidine nucleotides. The small subunit (glutamine amidotransferase) binds and cleaves glutamine to supply the large subunit with the substrate ammonia. This Escherichia coli O6:H1 (strain CFT073 / ATCC 700928 / UPEC) protein is Carbamoyl phosphate synthase small chain.